A 457-amino-acid polypeptide reads, in one-letter code: Chromogranin-A (457 aa).

The first 18 residues, 1–18, serve as a signal peptide directing secretion; the sequence is MRSAAVLALLLCAGQVTA. The cysteines at positions 35 and 56 are disulfide-linked. Residues 41–59 form an O-glycosylated at one site only in cerebrospinal fluid region; the sequence is SDTLSKPSPMPVSQECFET. Residues 88–440 form a disordered region; sequence KERAHQQKKH…DQELESLSAI (353 aa). The span at 116–144 shows a compositional bias: basic and acidic residues; that stretch reads ELKEAVEEPSSKDVMEKREDSKEAEKSGE. S142 carries the phosphoserine modification. The segment covering 171 to 180 has biased composition (acidic residues); sequence GEEEEEEEEA. O-linked (GalNAc...) threonine glycosylation is found at T181 and T183. Positions 181–191 are O-glycosylated at one site only in cerebrospinal fluid; that stretch reads TNTHPPASLPS. Residues 182 to 191 are compositionally biased toward polar residues; it reads NTHPPASLPS. A Phosphotyrosine modification is found at Y194. Phosphoserine occurs at positions 203 and 218. A compositionally biased stretch (acidic residues) spans 229-249; it reads EEEEEEEEAEAGEEAVPEEEG. A glycan (O-linked (GalNAc...) threonine) is linked at T251. 2 stretches are compositionally biased toward basic and acidic residues: residues 263–272 and 291–303; these read KEIRKGESRS and PEGK…SQQK. Residues S270 and S300 each carry the phosphoserine modification. A Glycine amide modification is found at G319. Phosphoserine is present on residues S322, S333, and S371. Over residues 330–360 the composition is skewed to basic and acidic residues; sequence ERLSKEWEDSKRWSKMDQLAKELTAEKRLEG. A Methionine sulfoxide modification is found at M372. S398, S402, S424, and S438 each carry phosphoserine. Residues 414–431 show a composition bias toward basic and acidic residues; sequence YPEEKKEEEGSANRRPED. An O-linked (Xyl...) (chondroitin sulfate) serine glycan is attached at S424. R456 carries the post-translational modification Arginine amide.

This sequence belongs to the chromogranin/secretogranin protein family. As to quaternary structure, self-interacts; self-assembly is promoted in vitro by chondroitin sulfate attachment which occurs at mildly acidic pH conditions. Interacts with SCG3. Interacts with ITPR1 in the secretory granules. Post-translationally, sulfated on tyrosine residues and/or contains sulfated glycans. In terms of processing, O-glycosylated with core 1 or possibly core 8 glycans. Contains chondroitin sulfate (CS); CS attachment is pH-dependent, being observed at mildly acidic conditions of pH 5 but not at neutral pH, and promotes self-assembly in vitro. Proteolytic processing gives rise to an additional longer form of catestatin (residues 358-390) which displays a less potent catecholamine release-inhibitory activity. Plasmin-mediated proteolytic processing can give rise to additional shorter and longer forms of catestatin peptides. In terms of tissue distribution, detected in cerebrospinal fluid (at protein level). Detected in urine (at protein level). As to expression, found in the brain.

The protein resides in the secreted. It is found in the cytoplasmic vesicle. The protein localises to the secretory vesicle. Its subcellular location is the neuronal dense core vesicle. Strongly inhibits glucose induced insulin release from the pancreas. Its function is as follows. Inhibits catecholamine release from chromaffin cells and noradrenergic neurons by acting as a non-competitive nicotinic cholinergic antagonist. Displays antibacterial activity against Gram-positive bacteria S.aureus and M.luteus, and Gram-negative bacteria E.coli and P.aeruginosa. Can induce mast cell migration, degranulation and production of cytokines and chemokines. Acts as a potent scavenger of free radicals in vitro. May play a role in the regulation of cardiac function and blood pressure. Functionally, regulates granule biogenesis in endocrine cells by up-regulating the transcription of protease nexin 1 (SERPINE2) via a cAMP-PKA-SP1 pathway. This leads to inhibition of granule protein degradation in the Golgi complex which in turn promotes granule formation. The polypeptide is Chromogranin-A (CHGA) (Homo sapiens (Human)).